A 543-amino-acid polypeptide reads, in one-letter code: Cytochrome P450 1B1 (543 aa).

C470 is a heme binding site.

It belongs to the cytochrome P450 family. Requires heme as cofactor.

The protein localises to the endoplasmic reticulum membrane. Its subcellular location is the microsome membrane. The protein resides in the mitochondrion. The enzyme catalyses an organic molecule + reduced [NADPH--hemoprotein reductase] + O2 = an alcohol + oxidized [NADPH--hemoprotein reductase] + H2O + H(+). It catalyses the reaction 17beta-estradiol + reduced [NADPH--hemoprotein reductase] + O2 = 2-hydroxy-17beta-estradiol + oxidized [NADPH--hemoprotein reductase] + H2O + H(+). The catalysed reaction is 17beta-estradiol + reduced [NADPH--hemoprotein reductase] + O2 = 4-hydroxy-17beta-estradiol + oxidized [NADPH--hemoprotein reductase] + H2O + H(+). It carries out the reaction estrone + reduced [NADPH--hemoprotein reductase] + O2 = 2-hydroxyestrone + oxidized [NADPH--hemoprotein reductase] + H2O + H(+). The enzyme catalyses estrone + reduced [NADPH--hemoprotein reductase] + O2 = 4-hydroxyestrone + oxidized [NADPH--hemoprotein reductase] + H2O + H(+). It catalyses the reaction testosterone + reduced [NADPH--hemoprotein reductase] + O2 = 6beta,17beta-dihydroxyandrost-4-en-3-one + oxidized [NADPH--hemoprotein reductase] + H2O + H(+). The catalysed reaction is progesterone + reduced [NADPH--hemoprotein reductase] + O2 = 6beta-hydroxyprogesterone + oxidized [NADPH--hemoprotein reductase] + H2O + H(+). It carries out the reaction progesterone + reduced [NADPH--hemoprotein reductase] + O2 = 16alpha-hydroxyprogesterone + oxidized [NADPH--hemoprotein reductase] + H2O + H(+). The enzyme catalyses all-trans-retinol + reduced [NADPH--hemoprotein reductase] + O2 = all-trans-retinal + oxidized [NADPH--hemoprotein reductase] + 2 H2O + H(+). It catalyses the reaction all-trans-retinal + reduced [NADPH--hemoprotein reductase] + O2 = all-trans-retinoate + oxidized [NADPH--hemoprotein reductase] + H2O + 2 H(+). The catalysed reaction is (5Z,8Z,11Z,14Z)-eicosatetraenoate + reduced [NADPH--hemoprotein reductase] + O2 = (8R,9S)-epoxy-(5Z,11Z,14Z)-eicosatrienoate + oxidized [NADPH--hemoprotein reductase] + H2O + H(+). It carries out the reaction (5Z,8Z,11Z,14Z)-eicosatetraenoate + reduced [NADPH--hemoprotein reductase] + O2 = (11R,12S)-epoxy-(5Z,8Z,14Z)-eicosatrienoate + oxidized [NADPH--hemoprotein reductase] + H2O + H(+). The enzyme catalyses (5Z,8Z,11Z,14Z)-eicosatetraenoate + reduced [NADPH--hemoprotein reductase] + O2 = (11S,12R)-epoxy-(5Z,8Z,14Z)-eicosatrienoate + oxidized [NADPH--hemoprotein reductase] + H2O + H(+). It catalyses the reaction (5Z,8Z,11Z,14Z)-eicosatetraenoate + reduced [NADPH--hemoprotein reductase] + O2 = (14S,15R)-epoxy-(5Z,8Z,11Z)-eicosatrienoate + oxidized [NADPH--hemoprotein reductase] + H2O + H(+). The catalysed reaction is (5Z,8Z,11Z,14Z)-eicosatetraenoate + reduced [NADPH--hemoprotein reductase] + O2 = (14R,15S)-epoxy-(5Z,8Z,11Z)-eicosatrienoate + oxidized [NADPH--hemoprotein reductase] + H2O + H(+). It carries out the reaction (5S)-hydroperoxy-(6E,8Z,11Z,14Z)-eicosatetraenoate = 5-oxo-(6E,8Z,11Z,14Z)-eicosatetraenoate + H2O. The enzyme catalyses (12S)-hydroperoxy-(5Z,8Z,10E,14Z)-eicosatetraenoate = 12-oxo-(5Z,8Z,10E,14Z)-eicosatetraenoate + H2O. It catalyses the reaction (15S)-hydroperoxy-(5Z,8Z,11Z,13E)-eicosatetraenoate = 15-oxo-(5Z,8Z,11Z,13E)-eicosatetraenoate + H2O. The catalysed reaction is (13S)-hydroperoxy-(9Z,11E)-octadecadienoate = 13-oxo-(9Z,11E)-octadecadienoate + H2O. Its pathway is steroid hormone biosynthesis. It participates in cofactor metabolism; retinol metabolism. It functions in the pathway lipid metabolism; arachidonate metabolism. Its activity is regulated as follows. Enzyme activity is increased by cytochrome b5. Enzyme activity is increased by liposomes containing anionic phospholipids, phosphatidic acid and cardiolipin. Inhibited by naringenin with an IC(50) of 5 uM. Functionally, a cytochrome P450 monooxygenase involved in the metabolism of various endogenous substrates, including fatty acids, steroid hormones and vitamins. Mechanistically, uses molecular oxygen inserting one oxygen atom into a substrate, and reducing the second into a water molecule, with two electrons provided by NADPH via cytochrome P450 reductase (NADPH--hemoprotein reductase). Exhibits catalytic activity for the formation of hydroxyestrogens from 17beta-estradiol (E2), namely 2- and 4-hydroxy E2. Metabolizes testosterone and progesterone to B or D ring hydroxylated metabolites. May act as a major enzyme for all-trans retinoic acid biosynthesis in extrahepatic tissues. Catalyzes two successive oxidative transformation of all-trans retinol to all-trans retinal and then to the active form all-trans retinoic acid. Catalyzes the epoxidation of double bonds of certain PUFA. Converts arachidonic acid toward epoxyeicosatrienoic acid (EpETrE) regioisomers, 8,9-, 11,12-, and 14,15- EpETrE, that function as lipid mediators in the vascular system. Additionally, displays dehydratase activity toward oxygenated eicosanoids including hydroperoxyeicosatetraenoates (HpETEs). This activity is independent of cytochrome P450 reductase, NADPH, and O2. Also involved in the oxidative metabolism of xenobiotics, particularly converting polycyclic aromatic hydrocarbons and heterocyclic aryl amines procarcinogens to DNA-damaging products. Plays an important role in retinal vascular development. Under ambient/hyperoxic O2 conditions, promotes angiogenesis and capillary morphogenesis of retinal endothelial cells and pericytes, likely by metabolizing the oxygenated products symptomatic of oxidative stress. Also, contributes to oxidative homeostasis and ultrastructural organization and function of trabecular meshwork tissue through modulation of POSTN expression. This is Cytochrome P450 1B1 from Rattus norvegicus (Rat).